A 497-amino-acid polypeptide reads, in one-letter code: tRNA-2-methylthio-N(6)-dimethylallyladenosine synthase (497 aa).

The interval 1–50 is disordered; that stretch reads MTGTSNIPTHGKEHKDAPALLPLPAPNPHHTHAAHPGNPSHDRPPSRGKL. Positions 48 to 165 constitute an MTTase N-terminal domain; the sequence is GKLFIKTHGC…LPDMIRARRE (118 aa). [4Fe-4S] cluster contacts are provided by Cys57, Cys94, Cys128, Cys202, Cys206, and Cys209. In terms of domain architecture, Radical SAM core spans 188–430; the sequence is RAEGPSAFVS…QKHINTYAAD (243 aa). A TRAM domain is found at 433-496; sequence KRMIGTVQTV…SNSLRGRVHT (64 aa).

Belongs to the methylthiotransferase family. MiaB subfamily. Monomer. Requires [4Fe-4S] cluster as cofactor.

It localises to the cytoplasm. The catalysed reaction is N(6)-dimethylallyladenosine(37) in tRNA + (sulfur carrier)-SH + AH2 + 2 S-adenosyl-L-methionine = 2-methylsulfanyl-N(6)-dimethylallyladenosine(37) in tRNA + (sulfur carrier)-H + 5'-deoxyadenosine + L-methionine + A + S-adenosyl-L-homocysteine + 2 H(+). Catalyzes the methylthiolation of N6-(dimethylallyl)adenosine (i(6)A), leading to the formation of 2-methylthio-N6-(dimethylallyl)adenosine (ms(2)i(6)A) at position 37 in tRNAs that read codons beginning with uridine. This Xylella fastidiosa (strain 9a5c) protein is tRNA-2-methylthio-N(6)-dimethylallyladenosine synthase.